Here is a 943-residue protein sequence, read N- to C-terminus: Protein translocase subunit SecA (943 aa).

ATP contacts are provided by residues Q90, 108-112, and D509; that span reads GEGKT. The segment at 537 to 556 is disordered; the sequence is NEHKPPIPKQRSSKSKGGFS.

It belongs to the SecA family. In terms of assembly, monomer and homodimer. Part of the essential Sec protein translocation apparatus which comprises SecA, SecYEG and auxiliary proteins SecDF. Other proteins may also be involved.

It localises to the cell inner membrane. Its subcellular location is the cellular thylakoid membrane. The protein resides in the cytoplasm. The catalysed reaction is ATP + H2O + cellular proteinSide 1 = ADP + phosphate + cellular proteinSide 2.. In terms of biological role, part of the Sec protein translocase complex. Interacts with the SecYEG preprotein conducting channel. Has a central role in coupling the hydrolysis of ATP to the transfer of proteins into and across the cell membrane, serving as an ATP-driven molecular motor driving the stepwise translocation of polypeptide chains across the membrane. Its function is as follows. Probably participates in protein translocation into and across both the cytoplasmic and thylakoid membranes in cyanobacterial cells. The protein is Protein translocase subunit SecA of Prochlorococcus marinus (strain MIT 9301).